The primary structure comprises 180 residues: Inner membrane-spanning protein YciB (180 aa).

Transmembrane regions (helical) follow at residues 25 to 45 (QNAT…CYFV), 54 to 74 (IISV…GNSI), 76 to 96 (IKIK…MSGI), 118 to 138 (ITLS…NEIV), and 150 to 170 (FKVF…LPLL).

The protein belongs to the YciB family.

The protein resides in the cell inner membrane. Functionally, plays a role in cell envelope biogenesis, maintenance of cell envelope integrity and membrane homeostasis. The sequence is that of Inner membrane-spanning protein YciB from Rickettsia canadensis (strain McKiel).